The following is a 427-amino-acid chain: Trigger factor (427 aa).

Positions 163-248 (GDTVVIDFVG…IHEVKAKEVP (86 aa)) constitute a PPIase FKBP-type domain.

The protein belongs to the FKBP-type PPIase family. Tig subfamily.

It localises to the cytoplasm. It carries out the reaction [protein]-peptidylproline (omega=180) = [protein]-peptidylproline (omega=0). Functionally, involved in protein export. Acts as a chaperone by maintaining the newly synthesized protein in an open conformation. Functions as a peptidyl-prolyl cis-trans isomerase. In Streptococcus suis (strain 05ZYH33), this protein is Trigger factor.